Reading from the N-terminus, the 217-residue chain is Large ribosomal subunit protein uL1 (217 aa).

At Tyr-11 the chain carries Phosphotyrosine. An N6-acetyllysine mark is found at Lys-91 and Lys-106. Residue Lys-118 is modified to N6-acetyllysine; alternate. Lys-118 participates in a covalent cross-link: Glycyl lysine isopeptide (Lys-Gly) (interchain with G-Cter in SUMO1); alternate. A Glycyl lysine isopeptide (Lys-Gly) (interchain with G-Cter in SUMO2); alternate cross-link involves residue Lys-118. A Glycyl lysine isopeptide (Lys-Gly) (interchain with G-Cter in SUMO2) cross-link involves residue Lys-161.

This sequence belongs to the universal ribosomal protein uL1 family. As to quaternary structure, component of the large ribosomal subunit.

It localises to the cytoplasm. In terms of biological role, component of the large ribosomal subunit. The ribosome is a large ribonucleoprotein complex responsible for the synthesis of proteins in the cell. The polypeptide is Large ribosomal subunit protein uL1 (RPL10A) (Oryctolagus cuniculus (Rabbit)).